Here is a 64-residue protein sequence, read N- to C-terminus: Large ribosomal subunit protein bL35 (64 aa).

The interval 1–56 (MPKMKSNKSVAARFKLTGSGQLKRTRPGKRHKLSKKSSQEKRNLSKQPLVDKGQVG) is disordered. Basic residues predominate over residues 23–35 (KRTRPGKRHKLSK).

This sequence belongs to the bacterial ribosomal protein bL35 family.

The polypeptide is Large ribosomal subunit protein bL35 (Chlamydia abortus (strain DSM 27085 / S26/3) (Chlamydophila abortus)).